The chain runs to 210 residues: Amelogenin, X isoform (210 aa).

The first 16 residues, 1–16 (MGTWILFACLLGAAFA), serve as a signal peptide directing secretion. Phosphoserine is present on Ser-32. Low complexity-rich tracts occupy residues 109–119 (VAPQQPMMPVP) and 136–169 (PSAQ…HPMQ). Residues 109-187 (VAPQQPMMPV…PPLFSMQPLS (79 aa)) are disordered. Pro residues predominate over residues 170–179 (PLAPQPPLPP).

Belongs to the amelogenin family. In terms of assembly, interacts with KRT5. In terms of processing, several forms are produced by C-terminal processing. Phosphorylated by FAM20C in vitro.

Its subcellular location is the secreted. The protein resides in the extracellular space. It localises to the extracellular matrix. Its function is as follows. Plays a role in the biomineralization of teeth. Seems to regulate the formation of crystallites during the secretory stage of tooth enamel development. Thought to play a major role in the structural organization and mineralization of developing enamel. This chain is Amelogenin, X isoform (Amelx), found in Mus musculus (Mouse).